The following is a 229-amino-acid chain: Elongation factor 1-delta 1 (229 aa).

The disordered stretch occupies residues 80 to 109; it reads ESTAVPSASTPDVADAKAPAADDDDDDDVD. Over residues 100 to 109 the composition is skewed to acidic residues; that stretch reads ADDDDDDDVD.

The protein belongs to the EF-1-beta/EF-1-delta family. As to quaternary structure, EF-1 is composed of 4 subunits: alpha, beta (1B-alpha=beta'), delta (1B-beta), and gamma (1B-gamma).

EF-1-beta and EF-1-beta' stimulate the exchange of GDP bound to EF-1-alpha to GTP. The polypeptide is Elongation factor 1-delta 1 (Oryza sativa subsp. japonica (Rice)).